We begin with the raw amino-acid sequence, 53 residues long: Conotoxin Cal6.27 (53 aa).

Residues 1-24 form the signal peptide; the sequence is MKLTCVLIAAMLLLAVCQLDSADA. Disulfide bonds link Cys-29/Cys-43, Cys-36/Cys-47, and Cys-42/Cys-51.

Belongs to the conotoxin O1 superfamily. As to expression, expressed by the venom duct.

It is found in the secreted. Functionally, probable neurotoxin. The protein is Conotoxin Cal6.27 of Californiconus californicus (California cone).